Consider the following 496-residue polypeptide: Lysine--tRNA ligase (496 aa).

2 residues coordinate Mg(2+): Glu-408 and Glu-415.

This sequence belongs to the class-II aminoacyl-tRNA synthetase family. As to quaternary structure, homodimer. Mg(2+) serves as cofactor.

It is found in the cytoplasm. The catalysed reaction is tRNA(Lys) + L-lysine + ATP = L-lysyl-tRNA(Lys) + AMP + diphosphate. This chain is Lysine--tRNA ligase, found in Legionella pneumophila (strain Corby).